Here is a 303-residue protein sequence, read N- to C-terminus: Probable 5-dehydro-4-deoxyglucarate dehydratase (303 aa).

The protein belongs to the DapA family.

It catalyses the reaction 5-dehydro-4-deoxy-D-glucarate + H(+) = 2,5-dioxopentanoate + CO2 + H2O. Its pathway is carbohydrate acid metabolism; D-glucarate degradation; 2,5-dioxopentanoate from D-glucarate: step 2/2. The chain is Probable 5-dehydro-4-deoxyglucarate dehydratase from Paracidovorax citrulli (strain AAC00-1) (Acidovorax citrulli).